The primary structure comprises 331 residues: tRNA uridine(34) hydroxylase (331 aa).

The 97-residue stretch at 122 to 218 (KENRCLVLDV…YGQAVGTGKW (97 aa)) folds into the Rhodanese domain. The Cysteine persulfide intermediate role is filled by C178.

It belongs to the TrhO family.

It catalyses the reaction uridine(34) in tRNA + AH2 + O2 = 5-hydroxyuridine(34) in tRNA + A + H2O. In terms of biological role, catalyzes oxygen-dependent 5-hydroxyuridine (ho5U) modification at position 34 in tRNAs. The sequence is that of tRNA uridine(34) hydroxylase from Chlamydia caviae (strain ATCC VR-813 / DSM 19441 / 03DC25 / GPIC) (Chlamydophila caviae).